Consider the following 211-residue polypeptide: Uracil phosphoribosyltransferase (211 aa).

5-phospho-alpha-D-ribose 1-diphosphate is bound by residues Arg-79, Arg-104, and 131–139 (DPMLATGGS). Residues Ile-196 and 201 to 203 (GDA) each bind uracil. Asp-202 is a 5-phospho-alpha-D-ribose 1-diphosphate binding site.

The protein belongs to the UPRTase family. Mg(2+) is required as a cofactor.

It catalyses the reaction UMP + diphosphate = 5-phospho-alpha-D-ribose 1-diphosphate + uracil. Its pathway is pyrimidine metabolism; UMP biosynthesis via salvage pathway; UMP from uracil: step 1/1. Its activity is regulated as follows. Allosterically activated by GTP. Its function is as follows. Catalyzes the conversion of uracil and 5-phospho-alpha-D-ribose 1-diphosphate (PRPP) to UMP and diphosphate. This chain is Uracil phosphoribosyltransferase, found in Lactococcus lactis subsp. cremoris (strain SK11).